A 225-amino-acid polypeptide reads, in one-letter code: Platelet-activating factor acetylhydrolase IB subunit beta homolog (225 aa).

This sequence belongs to the 'GDSL' lipolytic enzyme family. Platelet-activating factor acetylhydrolase IB beta/gamma subunits subfamily. Does not interact with Lis-1.

The chain is Platelet-activating factor acetylhydrolase IB subunit beta homolog (Paf-AHalpha) from Drosophila melanogaster (Fruit fly).